We begin with the raw amino-acid sequence, 137 residues long: Nucleoside diphosphate kinase (137 aa).

Residues lysine 10, phenylalanine 58, arginine 86, threonine 92, arginine 103, and asparagine 113 each coordinate ATP. The active-site Pros-phosphohistidine intermediate is histidine 116.

Belongs to the NDK family. In terms of assembly, homotetramer. It depends on Mg(2+) as a cofactor.

It localises to the cytoplasm. It catalyses the reaction a 2'-deoxyribonucleoside 5'-diphosphate + ATP = a 2'-deoxyribonucleoside 5'-triphosphate + ADP. The catalysed reaction is a ribonucleoside 5'-diphosphate + ATP = a ribonucleoside 5'-triphosphate + ADP. Its function is as follows. Major role in the synthesis of nucleoside triphosphates other than ATP. The ATP gamma phosphate is transferred to the NDP beta phosphate via a ping-pong mechanism, using a phosphorylated active-site intermediate. The polypeptide is Nucleoside diphosphate kinase (Helicobacter pylori (strain G27)).